Consider the following 290-residue polypeptide: Pirin (290 aa).

Residues His-56, His-58, His-101, and Glu-103 each coordinate Fe cation.

The protein belongs to the pirin family. As to quaternary structure, may interact with NF1/CTF1. Interacts with BCL3. Identified in a complex comprised of PIR, BLC3, NFKB1 and target DNA. Fe cation serves as cofactor. As to expression, highly expressed in a subset of melanomas. Detected at very low levels in most tissues (at protein level). Expressed in all tissues, with highest level of expression in heart and liver.

It localises to the nucleus. The protein resides in the cytoplasm. The catalysed reaction is quercetin + O2 = 2-(3,4-dihydroxybenzoyloxy)-4,6-dihydroxybenzoate + CO. It functions in the pathway flavonoid metabolism; quercetin degradation. Inhibited by kojic acid, sodium diethyldithiocarbamate and 1,10-phenanthroline monohydrochloride. Transcriptional coregulator of NF-kappa-B which facilitates binding of NF-kappa-B proteins to target kappa-B genes in a redox-state-dependent manner. May be required for efficient terminal myeloid maturation of hematopoietic cells. Has quercetin 2,3-dioxygenase activity (in vitro). The sequence is that of Pirin (PIR) from Homo sapiens (Human).